The sequence spans 66 residues: Large ribosomal subunit protein bL35 (66 aa).

Over residues 1 to 26 (MPKMKTHRGSAKRFKKTASGKLKRGH) the composition is skewed to basic residues. Residues 1 to 29 (MPKMKTHRGSAKRFKKTASGKLKRGHAYT) form a disordered region.

Belongs to the bacterial ribosomal protein bL35 family.

The polypeptide is Large ribosomal subunit protein bL35 (Geobacillus kaustophilus (strain HTA426)).